The chain runs to 353 residues: MKAKTRQIRVGNVPVGGDAPCSVQSMCNTDTRDAGATLDQINALAAAGCEIVRCAVPDMAAAEALGAIKRQSPIPVIADIHFDYKLALKVLEGGIDGLRLNPGNIGERWKVEEVVAAARERLVPIRIGVNAGSLEKELLQKYGHPTAEAMVESALGHVRILEELGYDQIKISLKASDVPKTVAAYRLLAQRIDYPLHIGITEAGTMFSGTIKSAVGLGILLADGIGDTLRVSLTGDPVDEVRVGFEILKALNLRQKGINLVSCPTCGRCQINLIGVAEEVEKRLAGIDAHLTVAVMGCVVNGPGEAREADVGIAGGRGEGLLFRNGEIVRKVPEADMADALIAEVEKILAEKH.

[4Fe-4S] cluster-binding residues include C263, C266, C298, and E305.

It belongs to the IspG family. The cofactor is [4Fe-4S] cluster.

The enzyme catalyses (2E)-4-hydroxy-3-methylbut-2-enyl diphosphate + oxidized [flavodoxin] + H2O + 2 H(+) = 2-C-methyl-D-erythritol 2,4-cyclic diphosphate + reduced [flavodoxin]. Its pathway is isoprenoid biosynthesis; isopentenyl diphosphate biosynthesis via DXP pathway; isopentenyl diphosphate from 1-deoxy-D-xylulose 5-phosphate: step 5/6. In terms of biological role, converts 2C-methyl-D-erythritol 2,4-cyclodiphosphate (ME-2,4cPP) into 1-hydroxy-2-methyl-2-(E)-butenyl 4-diphosphate. The sequence is that of 4-hydroxy-3-methylbut-2-en-1-yl diphosphate synthase (flavodoxin) from Geobacter sulfurreducens (strain ATCC 51573 / DSM 12127 / PCA).